The chain runs to 489 residues: Ribulose bisphosphate carboxylase large chain (489 aa).

Substrate-binding residues include N128 and T178. Catalysis depends on K180, which acts as the Proton acceptor. K182 is a substrate binding site. Mg(2+)-binding residues include K206, D208, and E209. An N6-carboxylysine modification is found at K206. Residue H298 is the Proton acceptor of the active site. Residues R299, H331, and S383 each contribute to the substrate site.

The protein belongs to the RuBisCO large chain family. Type I subfamily. In terms of assembly, heterohexadecamer of 8 large chains and 8 small chains. It depends on Mg(2+) as a cofactor.

The enzyme catalyses 2 (2R)-3-phosphoglycerate + 2 H(+) = D-ribulose 1,5-bisphosphate + CO2 + H2O. It catalyses the reaction D-ribulose 1,5-bisphosphate + O2 = 2-phosphoglycolate + (2R)-3-phosphoglycerate + 2 H(+). Functionally, ruBisCO catalyzes two reactions: the carboxylation of D-ribulose 1,5-bisphosphate, the primary event in carbon dioxide fixation, as well as the oxidative fragmentation of the pentose substrate. Both reactions occur simultaneously and in competition at the same active site. This is Ribulose bisphosphate carboxylase large chain from Nitrosospira sp. (strain 40KI).